Consider the following 173-residue polypeptide: Atrial gland and califin peptides (173 aa).

The first 21 residues, 1–21 (MKANTMFIILCLSLSTLCVSS), serve as a signal peptide directing secretion. The propeptide occupies 22–34 (QSTSVHGKIFVPN). Ile-69 bears the Isoleucine amide mark. A propeptide spanning residues 73–114 (AAGEMEQSEGQNPETKSHSWRKRSVLTPSLSSLGESLESGIS) is cleaved from the precursor. The tract at residues 75 to 94 (GEMEQSEGQNPETKSHSWRK) is disordered. Cys-141 and Cys-172 are oxidised to a cystine. Leu-152 is subject to Leucine amide.

This sequence belongs to the molluscan ELH family. In terms of assembly, califin A consists of a 36-residue large subunit bound by a single disulfide bond to a 18-residue small subunit.

Its subcellular location is the secreted. The atrial gland peptide A and peptide B precursors are the source of the 2 peptides that, upon release from this reproductive system gland, initiate the egg-laying process by exciting the bag cell neurons. These neurons, clustered in neural connectives near the abdominal ganglion, in turn release other peptides that act directly on the ganglion and also, via the circulating hemolymph, on many other organs to control the physiological processes of egg-laying. One of these other peptides is the egg-laying hormone. Functionally, injected in sexually mature animals califin A excites LB and LC cells of the abdominal ganglion and causes egg-laying. The polypeptide is Atrial gland and califin peptides (Aplysia californica (California sea hare)).